The chain runs to 384 residues: Dual-specificity RNA methyltransferase RlmN (384 aa).

Glu-93 serves as the catalytic Proton acceptor. The Radical SAM core domain maps to Glu-99–Asp-339. Residues Cys-106 and Cys-344 are joined by a disulfide bond. The [4Fe-4S] cluster site is built by Cys-113, Cys-117, and Cys-120. S-adenosyl-L-methionine-binding positions include Gly-170–Glu-171, Ser-202, Ser-224–His-226, and Asn-301. The active-site S-methylcysteine intermediate is Cys-344.

Belongs to the radical SAM superfamily. RlmN family. [4Fe-4S] cluster serves as cofactor.

The protein localises to the cytoplasm. The enzyme catalyses adenosine(2503) in 23S rRNA + 2 reduced [2Fe-2S]-[ferredoxin] + 2 S-adenosyl-L-methionine = 2-methyladenosine(2503) in 23S rRNA + 5'-deoxyadenosine + L-methionine + 2 oxidized [2Fe-2S]-[ferredoxin] + S-adenosyl-L-homocysteine. The catalysed reaction is adenosine(37) in tRNA + 2 reduced [2Fe-2S]-[ferredoxin] + 2 S-adenosyl-L-methionine = 2-methyladenosine(37) in tRNA + 5'-deoxyadenosine + L-methionine + 2 oxidized [2Fe-2S]-[ferredoxin] + S-adenosyl-L-homocysteine. In terms of biological role, specifically methylates position 2 of adenine 2503 in 23S rRNA and position 2 of adenine 37 in tRNAs. m2A2503 modification seems to play a crucial role in the proofreading step occurring at the peptidyl transferase center and thus would serve to optimize ribosomal fidelity. The protein is Dual-specificity RNA methyltransferase RlmN of Cupriavidus metallidurans (strain ATCC 43123 / DSM 2839 / NBRC 102507 / CH34) (Ralstonia metallidurans).